The primary structure comprises 717 residues: Methylcrotonoyl-CoA carboxylase subunit alpha, mitochondrial (717 aa).

The transit peptide at 1-38 directs the protein to the mitochondrion; it reads MAAAALLAAVDRNQLRRVPILLLQPREWAWKLRTMKYG. One can recognise a Biotin carboxylation domain in the interval 45–490; it reads ITKVLIANRG…HTDFIPQHHK (446 aa). Lysine 159 provides a ligand contact to ATP. The 198-residue stretch at 163–360 folds into the ATP-grasp domain; that stretch reads KSIMAAAGVP…LVEWQLRIAA (198 aa). Lysine 180 and lysine 193 each carry N6-acetyllysine. Residues lysine 201 and 207-208 each bind ATP; that span reads GG. Lysine 233 carries the post-translational modification N6-acetyllysine. ATP contacts are provided by histidine 251, histidine 278, and glutamate 318. Arginine 335 is an active-site residue. Lysine 490 bears the N6-acetyllysine mark. Lysine 577 bears the N6-acetyllysine; alternate mark. Lysine 577 is modified (N6-succinyllysine; alternate). Positions 622-711 constitute a Biotinyl-binding domain; sequence SIEVGIPVPK…NRHAPLVEFE (90 aa). Residue lysine 677 is modified to N6-biotinyllysine.

In terms of assembly, probably a dodecamer composed of six biotin-containing alpha subunits (MCCC1) and six beta (MCCC2) subunits. Interacts (via the biotin carboxylation domain) with SIRT4. Biotin serves as cofactor. Acetylated.

It localises to the mitochondrion matrix. It carries out the reaction 3-methylbut-2-enoyl-CoA + hydrogencarbonate + ATP = 3-methyl-(2E)-glutaconyl-CoA + ADP + phosphate + H(+). Its pathway is amino-acid degradation; L-leucine degradation; (S)-3-hydroxy-3-methylglutaryl-CoA from 3-isovaleryl-CoA: step 2/3. Its function is as follows. Biotin-attachment subunit of the 3-methylcrotonyl-CoA carboxylase, an enzyme that catalyzes the conversion of 3-methylcrotonyl-CoA to 3-methylglutaconyl-CoA, a critical step for leucine and isovaleric acid catabolism. This is Methylcrotonoyl-CoA carboxylase subunit alpha, mitochondrial (Mccc1) from Mus musculus (Mouse).